The primary structure comprises 113 residues: Nucleoid-associated protein ROP_41370 (113 aa).

Belongs to the YbaB/EbfC family. As to quaternary structure, homodimer.

The protein resides in the cytoplasm. Its subcellular location is the nucleoid. In terms of biological role, binds to DNA and alters its conformation. May be involved in regulation of gene expression, nucleoid organization and DNA protection. The polypeptide is Nucleoid-associated protein ROP_41370 (Rhodococcus opacus (strain B4)).